A 396-amino-acid polypeptide reads, in one-letter code: Elongation factor Tu (396 aa).

Residues 10-206 (KPHCNIGTIG…TVDAYIPQPE (197 aa)) form the tr-type G domain. Positions 19–26 (GHVDHGKT) are G1. GTP is bound at residue 19–26 (GHVDHGKT). Thr26 contributes to the Mg(2+) binding site. The tract at residues 60 to 64 (GITIS) is G2. The interval 81–84 (DCPG) is G3. GTP is bound by residues 81 to 85 (DCPGH) and 136 to 139 (NKVD). Residues 136–139 (NKVD) are G4. Residues 174–176 (SAL) are G5.

This sequence belongs to the TRAFAC class translation factor GTPase superfamily. Classic translation factor GTPase family. EF-Tu/EF-1A subfamily. Monomer.

The protein resides in the cytoplasm. It catalyses the reaction GTP + H2O = GDP + phosphate + H(+). In terms of biological role, GTP hydrolase that promotes the GTP-dependent binding of aminoacyl-tRNA to the A-site of ribosomes during protein biosynthesis. This Methylocella silvestris (strain DSM 15510 / CIP 108128 / LMG 27833 / NCIMB 13906 / BL2) protein is Elongation factor Tu.